A 311-amino-acid polypeptide reads, in one-letter code: Small ribosomal subunit biogenesis GTPase RsgA (311 aa).

The CP-type G domain maps to 77–239 (LSKQSHIIAT…IIDTPGIKGF (163 aa)). Residues 126 to 129 (NKTD) and 180 to 188 (GHSGVGKST) contribute to the GTP site. Residues Cys263, Cys268, His270, and Cys276 each coordinate Zn(2+).

This sequence belongs to the TRAFAC class YlqF/YawG GTPase family. RsgA subfamily. In terms of assembly, monomer. Associates with 30S ribosomal subunit, binds 16S rRNA. Requires Zn(2+) as cofactor.

The protein resides in the cytoplasm. One of several proteins that assist in the late maturation steps of the functional core of the 30S ribosomal subunit. Helps release RbfA from mature subunits. May play a role in the assembly of ribosomal proteins into the subunit. Circularly permuted GTPase that catalyzes slow GTP hydrolysis, GTPase activity is stimulated by the 30S ribosomal subunit. The polypeptide is Small ribosomal subunit biogenesis GTPase RsgA (Azobacteroides pseudotrichonymphae genomovar. CFP2).